Consider the following 304-residue polypeptide: Recombination-associated protein RdgC (304 aa).

The protein belongs to the RdgC family.

The protein resides in the cytoplasm. Its subcellular location is the nucleoid. Functionally, may be involved in recombination. The protein is Recombination-associated protein RdgC of Shewanella baltica (strain OS185).